The primary structure comprises 119 residues: MARVSRGVQAHAKHKKILKKAKGYYGARSKVYRIAKQAIIKAGQYAYRDRRQRRRQFRRLWIVRINAEARNNGLSYSRMINGMSKAGIEIDRKVLSDIAIFDKVAFAKIVDQVKQALSV.

Belongs to the bacterial ribosomal protein bL20 family.

In terms of biological role, binds directly to 23S ribosomal RNA and is necessary for the in vitro assembly process of the 50S ribosomal subunit. It is not involved in the protein synthesizing functions of that subunit. The protein is Large ribosomal subunit protein bL20 of Vesicomyosocius okutanii subsp. Calyptogena okutanii (strain HA).